Consider the following 496-residue polypeptide: Neuronal acetylcholine receptor subunit beta-4 (496 aa).

The first 19 residues, 1-19, serve as a signal peptide directing secretion; it reads MRSALPLVLFSLVALCGRG. Topologically, residues 20–236 are extracellular; that stretch reads DCRVANAEEK…IIKRKPLFYT (217 aa). N-linked (GlcNAc...) asparagine glycosylation is found at asparagine 36, asparagine 93, asparagine 138, and asparagine 166. A disulfide bond links cysteine 153 and cysteine 167. The helical transmembrane segment at 237–257 threads the bilayer; sequence INLIIPCVLITSLAILVFYLP. Residues 258–265 are Cytoplasmic-facing; it reads SDCGEKMT. Position 262 (glutamate 262) interacts with Na(+). Residues 266–286 form a helical membrane-spanning segment; that stretch reads LCISVLLALTVFLLLISKIVP. Over 287–298 the chain is Extracellular; the sequence is PTSLNVPLIGKY. The helical transmembrane segment at 299–319 threads the bilayer; the sequence is LMFTMVLVTFSIVTSVCVLNV. Residues 320-464 lie on the Cytoplasmic side of the membrane; sequence HHRSPSTHTM…WKYVAMVVDR (145 aa). The chain crosses the membrane as a helical span at residues 465–485; sequence LFLWVFVVVCVLGTVGLFLPP. Residues 486–496 lie on the Extracellular side of the membrane; that stretch reads LFQTHTPSEEP.

It belongs to the ligand-gated ion channel (TC 1.A.9) family. Acetylcholine receptor (TC 1.A.9.1) subfamily. Beta-4/CHRNB4 sub-subfamily. Neuronal AChR is composed of two different types of subunits: alpha and beta. CHRNB4/Beta-4 subunit can be combined to CHRNA2/alpha-2, CHRNA3/alpha-3 or CHRNA4/alpha-4, CHRNA5/alpha-5 and CHRNB3/beta-3 to give rise to functional receptors. Forms stoichiometries such as (CHRNA3)2:(CHRNB4)3 or (CHRNA3:CHRNB4)2:CHRNB3. Interacts with RIC3; which is required for proper folding and assembly. Interacts with LYPD6.

It is found in the synaptic cell membrane. The protein resides in the cell membrane. The catalysed reaction is Ca(2+)(in) = Ca(2+)(out). It carries out the reaction K(+)(in) = K(+)(out). It catalyses the reaction Na(+)(in) = Na(+)(out). Its function is as follows. Component of neuronal acetylcholine receptors (nAChRs) that function as pentameric, ligand-gated cation channels with high calcium permeability among other activities. nAChRs are excitatory neurotrasnmitter receptors formed by a collection of nAChR subunits known to mediate synaptic transmission in the nervous system and the neuromuscular junction. Each nAchR subunit confers differential attributes to channel properties, including activation, deactivation and desensitization kinetics, pH sensitivity, cation permeability, and binding to allosteric modulators. CHRNB4 forms heteropentameric neuronal acetylcholine receptors with CHRNA2, CHRNA3 and CHRNA4, as well as CHRNA5 and CHRNB3 as accesory subunits. CHRNA3:CHRNB4 being predominant in neurons of the autonomic ganglia, it is known as ganglionic nicotinic receptor. CHRNA3:CHRNB4 or CHRNA3:CHRNA5:CHRNB4 play also an important role in the habenulo-interpeduncular tract, modulating the mesolimbic dopamine system and affecting reward circuits and addiction. Hypothalamic CHRNA3:CHRNB4 nAChR activation by nicotine leads to activation of POMC neurons and a decrease in food intake. The chain is Neuronal acetylcholine receptor subunit beta-4 (CHRNB4) from Bos taurus (Bovine).